Consider the following 504-residue polypeptide: Acetylcholine receptor subunit epsilon (504 aa).

Positions 1–19 (MESGVRILSLLILLHNSLA) are cleaved as a signal peptide. At 20 to 240 (SESEESRLIK…IVFNLIIQRK (221 aa)) the chain is on the extracellular side. Asn88 and Asn161 each carry an N-linked (GlcNAc...) asparagine glycan. A disulfide bond links Cys148 and Cys162. A helical membrane pass occupies residues 241 to 265 (PLFYIINIIVPCVLISFLVVLVYFL). At 266–273 (PAKAGGQK) the chain is on the cytoplasmic side. A helical membrane pass occupies residues 274 to 292 (CTVSISVLLAQTVFLFLIA). Over 293–307 (QMVPETSLSVPLIGK) the chain is Extracellular. The helical transmembrane segment at 308–329 (YLMFVMFVSTLIVLSCVIVLNV) threads the bilayer. The Cytoplasmic portion of the chain corresponds to 330 to 473 (SLRSPSTHNL…WILIGKVLDV (144 aa)). Residues 474–497 (LCFWVALPLFVLGTLAIFLMGHFN) form a helical membrane-spanning segment. Topologically, residues 498–504 (TAPEHPF) are extracellular.

The protein belongs to the ligand-gated ion channel (TC 1.A.9) family. Acetylcholine receptor (TC 1.A.9.1) subfamily. Epsilon/CHRNE sub-subfamily. Pentamer of two alpha chains, and one each of the beta, delta, and gamma (in immature muscle) or epsilon (in mature muscle) chains.

It localises to the postsynaptic cell membrane. The protein resides in the cell membrane. The enzyme catalyses K(+)(in) = K(+)(out). The catalysed reaction is Na(+)(in) = Na(+)(out). Functionally, after binding acetylcholine, the AChR responds by an extensive change in conformation that affects all subunits and leads to opening of an ion-conducting channel across the plasma membrane. In Xenopus laevis (African clawed frog), this protein is Acetylcholine receptor subunit epsilon (chrne).